A 513-amino-acid polypeptide reads, in one-letter code: GMP synthase [glutamine-hydrolyzing] (513 aa).

The 191-residue stretch at 5–195 (LVLVIDFGGQ…VYNICGCTGD (191 aa)) folds into the Glutamine amidotransferase type-1 domain. The active-site Nucleophile is the Cys82. Active-site residues include His169 and Glu171. The 193-residue stretch at 196–388 (WKMDSFVEKT…LGIPEKLVFR (193 aa)) folds into the GMPS ATP-PPase domain. ATP is bound at residue 223–229 (SGGVDSS).

As to quaternary structure, homodimer.

The catalysed reaction is XMP + L-glutamine + ATP + H2O = GMP + L-glutamate + AMP + diphosphate + 2 H(+). Its pathway is purine metabolism; GMP biosynthesis; GMP from XMP (L-Gln route): step 1/1. Its function is as follows. Catalyzes the synthesis of GMP from XMP. In Clostridium botulinum (strain Alaska E43 / Type E3), this protein is GMP synthase [glutamine-hydrolyzing].